Here is a 161-residue protein sequence, read N- to C-terminus: UPF0178 protein BR1979/BS1330_I1973 (161 aa).

This sequence belongs to the UPF0178 family.

In Brucella suis biovar 1 (strain 1330), this protein is UPF0178 protein BR1979/BS1330_I1973.